Consider the following 309-residue polypeptide: HPr kinase/phosphorylase (309 aa).

Catalysis depends on residues H138 and K159. 153–160 is a binding site for ATP; that stretch reads GDSGIGKS. Residue S160 participates in Mg(2+) binding. D177 (proton acceptor; for phosphorylation activity. Proton donor; for dephosphorylation activity) is an active-site residue. The tract at residues 201–210 is important for the catalytic mechanism of both phosphorylation and dephosphorylation; that stretch reads LEIRGVGIID. E202 lines the Mg(2+) pocket. R243 is an active-site residue. The tract at residues 264–269 is important for the catalytic mechanism of dephosphorylation; sequence PVKTGR.

It belongs to the HPrK/P family. Homohexamer. The cofactor is Mg(2+).

The catalysed reaction is [HPr protein]-L-serine + ATP = [HPr protein]-O-phospho-L-serine + ADP + H(+). It catalyses the reaction [HPr protein]-O-phospho-L-serine + phosphate + H(+) = [HPr protein]-L-serine + diphosphate. Its activity is regulated as follows. Kinase activity is slightly activated by fructose 1,6-bisphosphate (FBP) at low ATP concentrations, and is inhibited by inorganic phosphate (Pi). Moreover, FBP, phosphoenolpyruvate and 2-phosphoglycerate, but not fructose 1-P, fructose 6-P, and ribulose 1,5-bisphosphate protect kinase activity against inhibition by Pi. Dephosphorylation of P-Ser-HPr by S.salivarius HPrK/P is strictly dependent on the presence of Pi, and is inhibited by FBP. FBP seems to modulate HPrK/P activities by enhancing affinity of the active site for ATP and, conversely, lowering the affinity for Pi. Catalyzes the ATP- as well as probably the pyrophosphate-dependent phosphorylation of 'Ser-46' in HPr, a phosphocarrier protein of the phosphoenolpyruvate-dependent sugar phosphotransferase system (PTS). HprK/P also catalyzes the pyrophosphate-producing, inorganic phosphate-dependent dephosphorylation (phosphorolysis) of seryl-phosphorylated HPr (P-Ser-HPr). The two antagonistic activities of HprK/P are regulated by several intracellular metabolites, which change their concentration in response to the absence or presence of rapidly metabolisable carbon sources (glucose, fructose, etc.) in the growth medium. Therefore, by controlling the phosphorylation state of HPr, the bifunctional HPr kinase/phosphorylase is a sensor enzyme that plays a major role in the regulation of carbon metabolism and sugar transport: it probably mediates carbon catabolite repression (CCR), and regulates PTS-catalyzed carbohydrate uptake and inducer exclusion. The sequence is that of HPr kinase/phosphorylase (hprK) from Streptococcus salivarius.